Consider the following 365-residue polypeptide: Peptide chain release factor 2 (365 aa).

Gln-251 is modified (N5-methylglutamine).

Belongs to the prokaryotic/mitochondrial release factor family. In terms of processing, methylated by PrmC. Methylation increases the termination efficiency of RF2.

The protein localises to the cytoplasm. Peptide chain release factor 2 directs the termination of translation in response to the peptide chain termination codons UGA and UAA. The polypeptide is Peptide chain release factor 2 (Neorickettsia sennetsu (strain ATCC VR-367 / Miyayama) (Ehrlichia sennetsu)).